The sequence spans 319 residues: Ribosomal RNA small subunit methyltransferase H (319 aa).

Residues 52-54 (GGH), Asp70, Phe100, Asp126, and Gln133 contribute to the S-adenosyl-L-methionine site. A disordered region spans residues 289–319 (PKPLSPSELERQRNPRARSAKLRVAARSSQM).

It belongs to the methyltransferase superfamily. RsmH family.

The protein resides in the cytoplasm. The catalysed reaction is cytidine(1402) in 16S rRNA + S-adenosyl-L-methionine = N(4)-methylcytidine(1402) in 16S rRNA + S-adenosyl-L-homocysteine + H(+). Functionally, specifically methylates the N4 position of cytidine in position 1402 (C1402) of 16S rRNA. This is Ribosomal RNA small subunit methyltransferase H from Synechococcus sp. (strain JA-2-3B'a(2-13)) (Cyanobacteria bacterium Yellowstone B-Prime).